Here is a 172-residue protein sequence, read N- to C-terminus: Translation initiation factor IF-3 (172 aa).

This sequence belongs to the IF-3 family. As to quaternary structure, monomer.

The protein resides in the cytoplasm. In terms of biological role, IF-3 binds to the 30S ribosomal subunit and shifts the equilibrium between 70S ribosomes and their 50S and 30S subunits in favor of the free subunits, thus enhancing the availability of 30S subunits on which protein synthesis initiation begins. This Campylobacter curvus (strain 525.92) protein is Translation initiation factor IF-3.